A 637-amino-acid chain; its full sequence is Phosphomethylpyrimidine synthase (637 aa).

Residues Asn242, Met271, Tyr300, His336, 356 to 358 (SRG), 397 to 400 (DGLR), and Glu436 each bind substrate. A Zn(2+)-binding site is contributed by His440. Position 463 (Tyr463) interacts with substrate. His504 lines the Zn(2+) pocket. Residues Cys584, Cys587, and Cys592 each contribute to the [4Fe-4S] cluster site.

It belongs to the ThiC family. As to quaternary structure, homodimer. [4Fe-4S] cluster serves as cofactor.

It carries out the reaction 5-amino-1-(5-phospho-beta-D-ribosyl)imidazole + S-adenosyl-L-methionine = 4-amino-2-methyl-5-(phosphooxymethyl)pyrimidine + CO + 5'-deoxyadenosine + formate + L-methionine + 3 H(+). It participates in cofactor biosynthesis; thiamine diphosphate biosynthesis. Its function is as follows. Catalyzes the synthesis of the hydroxymethylpyrimidine phosphate (HMP-P) moiety of thiamine from aminoimidazole ribotide (AIR) in a radical S-adenosyl-L-methionine (SAM)-dependent reaction. The protein is Phosphomethylpyrimidine synthase of Bordetella avium (strain 197N).